Consider the following 172-residue polypeptide: 3-hydroxydecanoyl-[acyl-carrier-protein] dehydratase (172 aa).

The active site involves His-71.

This sequence belongs to the thioester dehydratase family. FabA subfamily. As to quaternary structure, homodimer.

The protein resides in the cytoplasm. The enzyme catalyses a (3R)-hydroxyacyl-[ACP] = a (2E)-enoyl-[ACP] + H2O. The catalysed reaction is (3R)-hydroxydecanoyl-[ACP] = (2E)-decenoyl-[ACP] + H2O. It catalyses the reaction (2E)-decenoyl-[ACP] = (3Z)-decenoyl-[ACP]. It functions in the pathway lipid metabolism; fatty acid biosynthesis. Functionally, necessary for the introduction of cis unsaturation into fatty acids. Catalyzes the dehydration of (3R)-3-hydroxydecanoyl-ACP to E-(2)-decenoyl-ACP and then its isomerization to Z-(3)-decenoyl-ACP. Can catalyze the dehydratase reaction for beta-hydroxyacyl-ACPs with saturated chain lengths up to 16:0, being most active on intermediate chain length. The protein is 3-hydroxydecanoyl-[acyl-carrier-protein] dehydratase of Cronobacter sakazakii (strain ATCC BAA-894) (Enterobacter sakazakii).